A 480-amino-acid chain; its full sequence is Sialyltransferase-like protein 5 (480 aa).

Topologically, residues 1-17 (MARAPPPLSSLPPPPRR) are cytoplasmic. The signal-anchor for type II membrane protein transmembrane segment at 18–38 (PTVVLLLGLALAFCLAVLSIQ) threads the bilayer. Over 39–480 (SSFFTAPRLA…VCVRHERSSS (442 aa)) the chain is Lumenal. Residues N98, N130, N165, and N321 are each glycosylated (N-linked (GlcNAc...) asparagine).

It belongs to the glycosyltransferase 29 family.

The protein resides in the golgi apparatus membrane. In terms of biological role, may possess sialyltransferase-like activity in vitro. The polypeptide is Sialyltransferase-like protein 5 (Oryza sativa subsp. japonica (Rice)).